The chain runs to 545 residues: T-complex protein 1 subunit alpha (545 aa).

N-acetylserine is present on serine 2.

This sequence belongs to the TCP-1 chaperonin family. In terms of assembly, heterooligomeric complex of about 850 to 900 kDa that forms two stacked rings, 12 to 16 nm in diameter.

The protein resides in the cytoplasm. In terms of biological role, molecular chaperone; assists the folding of proteins upon ATP hydrolysis. Known to play a role, in vitro, in the folding of actin and tubulin. The polypeptide is T-complex protein 1 subunit alpha (Arabidopsis thaliana (Mouse-ear cress)).